A 214-amino-acid chain; its full sequence is MDGVSLADLRLNYTQGGLIEAEVADHPFAQFHIWLQQAIAAELPEPNAMTLSTLSEEGHPVGRMVLLKGLDERGFVFYTNYDSAKGQQLTAHPWAGLVFWWAALERQVRVDGQVEKIDPAESDAYFQSRPRGSQLGAWASPQSRIVGDRQELEDNLARWEKQYENQSIPRPPHWGGFRVIPHRIEFWQGRPSRLHDRLQFNLLDGQWHRQRLAP.

Substrate contacts are provided by residues 10–13 (RLNY) and Lys-68. FMN-binding positions include 63-68 (RMVLLK), 78-79 (YT), Lys-85, and Gln-107. Residues Tyr-125, Arg-129, and Ser-133 each contribute to the substrate site. Residues 142–143 (QS) and Trp-187 contribute to the FMN site. Residue 193-195 (RLH) coordinates substrate. Arg-197 lines the FMN pocket.

The protein belongs to the pyridoxamine 5'-phosphate oxidase family. As to quaternary structure, homodimer. Requires FMN as cofactor.

The catalysed reaction is pyridoxamine 5'-phosphate + O2 + H2O = pyridoxal 5'-phosphate + H2O2 + NH4(+). The enzyme catalyses pyridoxine 5'-phosphate + O2 = pyridoxal 5'-phosphate + H2O2. Its pathway is cofactor metabolism; pyridoxal 5'-phosphate salvage; pyridoxal 5'-phosphate from pyridoxamine 5'-phosphate: step 1/1. The protein operates within cofactor metabolism; pyridoxal 5'-phosphate salvage; pyridoxal 5'-phosphate from pyridoxine 5'-phosphate: step 1/1. Catalyzes the oxidation of either pyridoxine 5'-phosphate (PNP) or pyridoxamine 5'-phosphate (PMP) into pyridoxal 5'-phosphate (PLP). This chain is Pyridoxine/pyridoxamine 5'-phosphate oxidase, found in Synechocystis sp. (strain ATCC 27184 / PCC 6803 / Kazusa).